Here is a 156-residue protein sequence, read N- to C-terminus: ATP synthase subunit b (156 aa).

Residues 7–29 form a helical membrane-spanning segment; the sequence is LLGQAISFAMFVWFCMKYVWPPI.

It belongs to the ATPase B chain family. As to quaternary structure, F-type ATPases have 2 components, F(1) - the catalytic core - and F(0) - the membrane proton channel. F(1) has five subunits: alpha(3), beta(3), gamma(1), delta(1), epsilon(1). F(0) has three main subunits: a(1), b(2) and c(10-14). The alpha and beta chains form an alternating ring which encloses part of the gamma chain. F(1) is attached to F(0) by a central stalk formed by the gamma and epsilon chains, while a peripheral stalk is formed by the delta and b chains.

The protein localises to the cell inner membrane. Its function is as follows. F(1)F(0) ATP synthase produces ATP from ADP in the presence of a proton or sodium gradient. F-type ATPases consist of two structural domains, F(1) containing the extramembraneous catalytic core and F(0) containing the membrane proton channel, linked together by a central stalk and a peripheral stalk. During catalysis, ATP synthesis in the catalytic domain of F(1) is coupled via a rotary mechanism of the central stalk subunits to proton translocation. In terms of biological role, component of the F(0) channel, it forms part of the peripheral stalk, linking F(1) to F(0). The chain is ATP synthase subunit b from Vibrio vulnificus (strain CMCP6).